We begin with the raw amino-acid sequence, 339 residues long: D-erythrose-4-phosphate dehydrogenase (339 aa).

NAD(+)-binding positions include 12 to 13 (RI) and R81. Substrate contacts are provided by residues 154–156 (SCT), R200, 213–214 (TK), and R236. The active-site Nucleophile is the C155. Residue N318 participates in NAD(+) binding.

This sequence belongs to the glyceraldehyde-3-phosphate dehydrogenase family. Epd subfamily. Homotetramer.

The protein resides in the cytoplasm. It catalyses the reaction D-erythrose 4-phosphate + NAD(+) + H2O = 4-phospho-D-erythronate + NADH + 2 H(+). It functions in the pathway cofactor biosynthesis; pyridoxine 5'-phosphate biosynthesis; pyridoxine 5'-phosphate from D-erythrose 4-phosphate: step 1/5. In terms of biological role, catalyzes the NAD-dependent conversion of D-erythrose 4-phosphate to 4-phosphoerythronate. The sequence is that of D-erythrose-4-phosphate dehydrogenase from Escherichia fergusonii (strain ATCC 35469 / DSM 13698 / CCUG 18766 / IAM 14443 / JCM 21226 / LMG 7866 / NBRC 102419 / NCTC 12128 / CDC 0568-73).